The sequence spans 494 residues: ATP synthase subunit alpha 1 (494 aa).

This sequence belongs to the ATPase alpha/beta chains family. In terms of assembly, F-type ATPases have 2 components, CF(1) - the catalytic core - and CF(0) - the membrane proton channel. CF(1) has five subunits: alpha(3), beta(3), gamma(1), delta(1), epsilon(1). CF(0) has three main subunits: a(1), b(2) and c(9-12). The alpha and beta chains form an alternating ring which encloses part of the gamma chain. CF(1) is attached to CF(0) by a central stalk formed by the gamma and epsilon chains, while a peripheral stalk is formed by the delta and b chains.

The protein resides in the cell inner membrane. It catalyses the reaction ATP + H2O + 4 H(+)(in) = ADP + phosphate + 5 H(+)(out). Produces ATP from ADP in the presence of a proton gradient across the membrane. The alpha chain is a regulatory subunit. The sequence is that of ATP synthase subunit alpha 1 from Hahella chejuensis (strain KCTC 2396).